The following is a 939-amino-acid chain: Trafficking kinesin-binding protein 1 (939 aa).

The 308-residue stretch at Leu-46 to Thr-353 folds into the HAP1 N-terminal domain. Positions Lys-106 to Met-354 form a coiled coil. An interaction with HGS region spans residues Arg-359–Glu-509. Ser-444 is a glycosylation site (O-linked (GlcNAc) serine). The segment at Leu-472–Leu-492 is disordered. The stretch at His-490–Leu-524 forms a coiled coil. At Ser-534 the chain carries Phosphoserine. The segment at Pro-655–Thr-669 is interaction with OGT. Ser-677 and Ser-716 each carry an O-linked (GlcNAc) serine glycan. Phosphoserine is present on residues Ser-716 and Ser-905.

The protein belongs to the milton family. Interacts with RHOT1 and RHOT2. Found in a complex with KIF5B, OGT, RHOT1 and RHOT2. Interacts with HGS. Interacts with GABRA1. Interacts with KIF5C. Interacts with OGT; stable interaction is not required for glycosylation of this protein by OGT. Isoform 1 interacts with OGT. Post-translationally, O-glycosylated. Glycosylated by OGT; glycosylation in response to increased extracellular glucose levels is required for and leads to regulation of mitochondrial motility by OGT. Widely expressed with the greatest expression in brain, liver and kidney. Detected throughout the CNS, including the cortex, hippocamps, thalamus and various subcortical nuclei of the forebrain and midbrain, the granule of Purkinje layers of the cerebellum and the gray matter of the spinal cord. High level detected in lower moter neurons (at protein level).

It localises to the cytoplasm. The protein localises to the nucleus. The protein resides in the mitochondrion. Its subcellular location is the early endosome. It is found in the endosome. It localises to the mitochondrion membrane. The protein localises to the cell cortex. In terms of biological role, involved in the regulation of endosome-to-lysosome trafficking, including endocytic trafficking of EGF-EGFR complexes and GABA-A receptors. Involved in mitochondrial motility. When O-glycosylated, abolishes mitochondrial motility. Crucial for recruiting OGT to the mitochondrial surface of neuronal processes. TRAK1 and RHOT form an essential protein complex that links KIF5 to mitochondria for light chain-independent, anterograde transport of mitochondria. This Mus musculus (Mouse) protein is Trafficking kinesin-binding protein 1 (Trak1).